A 271-amino-acid chain; its full sequence is MPELPEVEVTKQGVSPYLIDNRVTDLIIRNPSLRWPVPDIAKQIIGQTIRAVRRRAKYLLIDTDAGTTIVHLGMSGSLRILPINSPVEKHDHIDLVLASGKILRYNDPRRFGAWLWNELPEQAHPLLAKLGPEPLESAFNSSYLLSALANKKKAIKLCLMDNHIVVGVGNIYANEALFAAGIHPQAEAGKVDAERISILVAEVKQILARAIKQGGTTLKDFTNAEGKPGYFAQKLHVYGRGGDTCTHCGQLLSEIRLGQRATVFCSICQQR.

Proline 2 functions as the Schiff-base intermediate with DNA in the catalytic mechanism. The Proton donor role is filled by glutamate 3. The active-site Proton donor; for beta-elimination activity is lysine 57. The DNA site is built by histidine 90, arginine 109, and lysine 151. Residues 236–270 (HVYGRGGDTCTHCGQLLSEIRLGQRATVFCSICQQ) form an FPG-type zinc finger. The active-site Proton donor; for delta-elimination activity is the arginine 260.

It belongs to the FPG family. As to quaternary structure, monomer. Zn(2+) serves as cofactor.

The enzyme catalyses Hydrolysis of DNA containing ring-opened 7-methylguanine residues, releasing 2,6-diamino-4-hydroxy-5-(N-methyl)formamidopyrimidine.. It carries out the reaction 2'-deoxyribonucleotide-(2'-deoxyribose 5'-phosphate)-2'-deoxyribonucleotide-DNA = a 3'-end 2'-deoxyribonucleotide-(2,3-dehydro-2,3-deoxyribose 5'-phosphate)-DNA + a 5'-end 5'-phospho-2'-deoxyribonucleoside-DNA + H(+). Functionally, involved in base excision repair of DNA damaged by oxidation or by mutagenic agents. Acts as a DNA glycosylase that recognizes and removes damaged bases. Has a preference for oxidized purines, such as 7,8-dihydro-8-oxoguanine (8-oxoG). Has AP (apurinic/apyrimidinic) lyase activity and introduces nicks in the DNA strand. Cleaves the DNA backbone by beta-delta elimination to generate a single-strand break at the site of the removed base with both 3'- and 5'-phosphates. This chain is Formamidopyrimidine-DNA glycosylase, found in Shewanella piezotolerans (strain WP3 / JCM 13877).